We begin with the raw amino-acid sequence, 348 residues long: D-alanine--D-alanine ligase (348 aa).

The region spanning 132 to 334 (KQVLATVGVP…YSDLIEKLVM (203 aa)) is the ATP-grasp domain. An ATP-binding site is contributed by 162–217 (LETLSFPIFVKPANMGSSVGISKATDESSLRSAIDLALKYDSRILIEQGVTAREIE). Asp288, Glu301, and Asn303 together coordinate Mg(2+).

The protein belongs to the D-alanine--D-alanine ligase family. Requires Mg(2+) as cofactor. Mn(2+) is required as a cofactor.

Its subcellular location is the cytoplasm. It carries out the reaction 2 D-alanine + ATP = D-alanyl-D-alanine + ADP + phosphate + H(+). The protein operates within cell wall biogenesis; peptidoglycan biosynthesis. In terms of biological role, cell wall formation. The sequence is that of D-alanine--D-alanine ligase from Streptococcus agalactiae serotype Ia (strain ATCC 27591 / A909 / CDC SS700).